Here is a 245-residue protein sequence, read N- to C-terminus: Probable phosphatase YPTB2019 (245 aa).

The Zn(2+) site is built by His-7, His-9, His-15, His-40, Glu-73, His-101, His-131, Asp-192, and His-194.

Belongs to the PHP family. In terms of assembly, homotrimer. Zn(2+) serves as cofactor.

This is Probable phosphatase YPTB2019 from Yersinia pseudotuberculosis serotype I (strain IP32953).